A 67-amino-acid chain; its full sequence is MGQKTALGSLLKSIGNSGQGKVVAGWGAVPVMAFIGVLLLVFLVILLQIYNQSLLLQGFSVDWNGVK.

The chain crosses the membrane as a helical span at residues 27–47 (GAVPVMAFIGVLLLVFLVILL).

This sequence belongs to the PsbH family. As to quaternary structure, PSII is composed of 1 copy each of membrane proteins PsbA, PsbB, PsbC, PsbD, PsbE, PsbF, PsbH, PsbI, PsbJ, PsbK, PsbL, PsbM, PsbT, PsbX, PsbY, Psb30/Ycf12, peripheral proteins PsbO, CyanoQ (PsbQ), PsbU, PsbV and a large number of cofactors. It forms dimeric complexes.

It is found in the cellular thylakoid membrane. One of the components of the core complex of photosystem II (PSII), required for its stability and/or assembly. PSII is a light-driven water:plastoquinone oxidoreductase that uses light energy to abstract electrons from H(2)O, generating O(2) and a proton gradient subsequently used for ATP formation. It consists of a core antenna complex that captures photons, and an electron transfer chain that converts photonic excitation into a charge separation. The sequence is that of Photosystem II reaction center protein H from Prochlorococcus marinus (strain MIT 9211).